An 848-amino-acid polypeptide reads, in one-letter code: Dolabradiene synthase KSL4, chloroplastic (848 aa).

Residues M1–H64 constitute a chloroplast transit peptide. Residues Q148–L168 are disordered. The Mg(2+) site is built by D597, D601, N742, S746, and E750. Residues D597–D601 carry the DDXXD motif motif.

Belongs to the terpene synthase family. Mg(2+) serves as cofactor.

It localises to the plastid. The protein localises to the chloroplast. It carries out the reaction ent-copalyl diphosphate = dolabradiene + diphosphate. In terms of biological role, involved in the production of antifungal dolabralexin phytoalexins in response to biotic and abiotic stresses. In response to fungal infection and in associtation with AN2, is involved in the production dolabradiene, a type of antifungal phytoalexin. Converts ent-copalyl disphosphate (ent-CPP) to dolabradiene. In Zea mays (Maize), this protein is Dolabradiene synthase KSL4, chloroplastic.